The chain runs to 198 residues: Small ribosomal subunit protein uS4 (198 aa).

The segment at 26 to 45 (LKKRPYAPGQHGQRRSKLSN) is disordered. Positions 91–154 (SRLDNVVYRL…KNLTIVKEAL (64 aa)) constitute an S4 RNA-binding domain.

It belongs to the universal ribosomal protein uS4 family. As to quaternary structure, part of the 30S ribosomal subunit. Contacts protein S5. The interaction surface between S4 and S5 is involved in control of translational fidelity.

In terms of biological role, one of the primary rRNA binding proteins, it binds directly to 16S rRNA where it nucleates assembly of the body of the 30S subunit. Its function is as follows. With S5 and S12 plays an important role in translational accuracy. The chain is Small ribosomal subunit protein uS4 from Acholeplasma laidlawii (strain PG-8A).